A 576-amino-acid polypeptide reads, in one-letter code: Sodium/proton antiporter 1 (576 aa).

The N-terminal 60 residues, 1–60 (MAVFPIGSHFAPPHQLTKRHVIATSSPISISTRLPQNVSFSKVSGVTGSTRLSKHGVLVR), are a transit peptide targeting the chloroplast. 9 helical membrane-spanning segments follow: residues 237 to 257 (TLLW…DNLT), 279 to 299 (LGGV…IGDV), 320 to 340 (FLPS…TSEV), 357 to 377 (APRG…VPVF), 379 to 399 (ALTG…LWIL), 426 to 446 (GALF…AGIL), 462 to 482 (LIAS…LVAA), 501 to 521 (LIAF…AAGV), and 541 to 561 (FAFA…NLHF).

The protein belongs to the NhaD Na(+)/H(+) (TC 2.A.62) antiporter family. In terms of tissue distribution, mostly expressed in mature and senescent leaves, and, to a lower extent, in seeds, roots, shoots, flowers and developing siliques.

It is found in the plastid. It localises to the chloroplast membrane. Its subcellular location is the chloroplast envelope. Na(+)/H(+) antiporter that extrudes sodium in exchange for external protons. This Arabidopsis thaliana (Mouse-ear cress) protein is Sodium/proton antiporter 1.